We begin with the raw amino-acid sequence, 336 residues long: F420-dependent glucose-6-phosphate dehydrogenase (336 aa).

D37 serves as a coordination point for coenzyme F420-(gamma-Glu)n. The active-site Proton donor is H38. Residues T74 and 105-106 contribute to the coenzyme F420-(gamma-Glu)n site; that span reads SG. The Proton acceptor role is filled by E107. Residues N110, 173–174, and 176–177 each bind coenzyme F420-(gamma-Glu)n; these read SG and SA. Substrate-binding residues include T191, K194, K255, and R279.

This sequence belongs to the F420-dependent glucose-6-phosphate dehydrogenase family. Homodimer.

The enzyme catalyses oxidized coenzyme F420-(gamma-L-Glu)(n) + D-glucose 6-phosphate + H(+) = 6-phospho-D-glucono-1,5-lactone + reduced coenzyme F420-(gamma-L-Glu)(n). In terms of biological role, catalyzes the coenzyme F420-dependent oxidation of glucose 6-phosphate (G6P) to 6-phosphogluconolactone. The sequence is that of F420-dependent glucose-6-phosphate dehydrogenase from Beutenbergia cavernae (strain ATCC BAA-8 / DSM 12333 / CCUG 43141 / JCM 11478 / NBRC 16432 / NCIMB 13614 / HKI 0122).